A 178-amino-acid chain; its full sequence is MFDIGWSELLVIGVVALIAIGPKELPGVLRMVGQWMGKARRMASEFQGQFQEAMREAEMADLKKSFDEVKEAASGFSPAGMMSSLQRDVDKALDIEGVDKPAEPVIATSPEPVASVETPVTPTTPEPPHAETFVEAEAHQAVGEPLAIVREIKPEPQPQPADGAAPAEPERLKDAKAS.

Residues 1–21 traverse the membrane as a helical segment; the sequence is MFDIGWSELLVIGVVALIAIG. Residues 146-178 form a disordered region; sequence LAIVREIKPEPQPQPADGAAPAEPERLKDAKAS. Residues 168–178 show a composition bias toward basic and acidic residues; it reads EPERLKDAKAS.

The protein belongs to the TatB family. As to quaternary structure, the Tat system comprises two distinct complexes: a TatABC complex, containing multiple copies of TatA, TatB and TatC subunits, and a separate TatA complex, containing only TatA subunits. Substrates initially bind to the TatABC complex, which probably triggers association of the separate TatA complex to form the active translocon.

It localises to the cell inner membrane. Part of the twin-arginine translocation (Tat) system that transports large folded proteins containing a characteristic twin-arginine motif in their signal peptide across membranes. Together with TatC, TatB is part of a receptor directly interacting with Tat signal peptides. TatB may form an oligomeric binding site that transiently accommodates folded Tat precursor proteins before their translocation. This Bradyrhizobium sp. (strain ORS 278) protein is Sec-independent protein translocase protein TatB.